A 316-amino-acid polypeptide reads, in one-letter code: Probable cell division protein WhiA (316 aa).

Positions 275 to 309 (TLKELGEMVSSGKISKSGINHRLRKLDEIAEQLRS) form a DNA-binding region, H-T-H motif.

It belongs to the WhiA family.

Its function is as follows. Involved in cell division and chromosome segregation. The protein is Probable cell division protein WhiA of Bacillus licheniformis (strain ATCC 14580 / DSM 13 / JCM 2505 / CCUG 7422 / NBRC 12200 / NCIMB 9375 / NCTC 10341 / NRRL NRS-1264 / Gibson 46).